A 203-amino-acid polypeptide reads, in one-letter code: MPRYLGPRFKKIRRLGALPGLTNKSPKAGSDLRKQPRSRKKSQYRIRLEEKQKLCFHYGLREYQLLNYVRIAAKAKGPTGQVLLQLLEMRLDNILFRLGMASTIPAARQLVNHRHILVNGRIVDRPSYRCKPRDIIMTKDNQKSRTLIQNSLGSSPQKELPNHLTLHPFQYKGLVNQIIDSKWVGLKINELLVVEYYSRQTKA.

Residues 19 to 43 (PGLTNKSPKAGSDLRKQPRSRKKSQ) form a disordered region. The region spanning 89 to 152 (MRLDNILFRL…KSRTLIQNSL (64 aa)) is the S4 RNA-binding domain.

This sequence belongs to the universal ribosomal protein uS4 family. As to quaternary structure, part of the 30S ribosomal subunit. Contacts protein S5. The interaction surface between S4 and S5 is involved in control of translational fidelity.

The protein resides in the plastid. The protein localises to the chloroplast. Its function is as follows. One of the primary rRNA binding proteins, it binds directly to 16S rRNA where it nucleates assembly of the body of the 30S subunit. Functionally, with S5 and S12 plays an important role in translational accuracy. This chain is Small ribosomal subunit protein uS4c (rps4), found in Jasminum nudiflorum (Winter jasmine).